A 227-amino-acid polypeptide reads, in one-letter code: ATP-dependent dethiobiotin synthetase BioD (227 aa).

Asp-13 to Val-18 contributes to the ATP binding site. Position 17 (Thr-17) interacts with Mg(2+). Lys-38 is a catalytic residue. ATP is bound by residues Asp-55, Glu-116–Gly-119, and Asn-176–Arg-177. Mg(2+) is bound by residues Asp-55 and Glu-116.

Belongs to the dethiobiotin synthetase family. As to quaternary structure, homodimer. It depends on Mg(2+) as a cofactor.

The protein resides in the cytoplasm. The enzyme catalyses (7R,8S)-7,8-diammoniononanoate + CO2 + ATP = (4R,5S)-dethiobiotin + ADP + phosphate + 3 H(+). Its pathway is cofactor biosynthesis; biotin biosynthesis; biotin from 7,8-diaminononanoate: step 1/2. In terms of biological role, catalyzes a mechanistically unusual reaction, the ATP-dependent insertion of CO2 between the N7 and N8 nitrogen atoms of 7,8-diaminopelargonic acid (DAPA, also called 7,8-diammoniononanoate) to form a ureido ring. The chain is ATP-dependent dethiobiotin synthetase BioD from Aliivibrio salmonicida (strain LFI1238) (Vibrio salmonicida (strain LFI1238)).